Here is a 234-residue protein sequence, read N- to C-terminus: MAENHCELLPPAPSGLGAGLGGGLCRRCSAGMGALAQRPGGVSKWVRLNVGGTYFLTTRQTLCRDPKSFLYRLCQADPDLDSDKDETGAYLIDRDPTYFGPVLNYLRHGKLVINKDLAEEGVLEEAEFYNITSLIKLVKDKIRERDSRISQMPVKHVYRVLQCQEEELTQMVSTMSDGWKFEQLVSIGSSYNYGNEDQAEFLCVVSKELHNTPYGTTSEPSEKAKILQERGSRM.

Ala2 carries the N-acetylalanine modification. The BTB domain maps to 44–146; it reads KWVRLNVGGT…LVKDKIRERD (103 aa). Positions 213 to 234 are disordered; it reads PYGTTSEPSEKAKILQERGSRM. Basic and acidic residues predominate over residues 220–234; that stretch reads PSEKAKILQERGSRM.

As to quaternary structure, homopentamer. Interacts (via C-terminus) with GRASP55/GORASP2. Interacts with CUL3 and with ubiquitinated proteins. Interacts with CRY1.

Its subcellular location is the cytoplasm. The protein localises to the cytosol. It is found in the nucleus. Its interaction with CUL3 suggests that it may act as a substrate adapter in some E3 ligase complex. Does not affect the function of Kv channel Kv2.1/KCNB1, Kv1.2/KCNA2, Kv4.2/KCND2 and Kv3.4/KCNC4. The chain is BTB/POZ domain-containing protein KCTD5 (Kctd5) from Mus musculus (Mouse).